Reading from the N-terminus, the 789-residue chain is Endonuclease MutS2 (789 aa).

An ATP-binding site is contributed by 334–341; sequence GPNTGGKT. Positions 690 to 714 are disordered; the sequence is PEKDIQQSGTGKIMKSKTGDTKSEV. A Smr domain is found at 714 to 789; the sequence is VDVRGKNLEE…GMGVTIVELK (76 aa).

The protein belongs to the DNA mismatch repair MutS family. MutS2 subfamily. As to quaternary structure, homodimer. Binds to stalled ribosomes, contacting rRNA.

In terms of biological role, endonuclease that is involved in the suppression of homologous recombination and thus may have a key role in the control of bacterial genetic diversity. Its function is as follows. Acts as a ribosome collision sensor, splitting the ribosome into its 2 subunits. Detects stalled/collided 70S ribosomes which it binds and splits by an ATP-hydrolysis driven conformational change. Acts upstream of the ribosome quality control system (RQC), a ribosome-associated complex that mediates the extraction of incompletely synthesized nascent chains from stalled ribosomes and their subsequent degradation. Probably generates substrates for RQC. This chain is Endonuclease MutS2, found in Alkaliphilus metalliredigens (strain QYMF).